The sequence spans 625 residues: Probable potassium transport system protein Kup 2 (625 aa).

12 helical membrane-spanning segments follow: residues 15–35, 52–72, 98–118, 134–154, 164–184, 212–232, 246–266, 284–304, 336–356, 365–385, 394–414, and 417–437; these read LSFA…LYAF, ILSL…LVIV, GGWL…DGML, LSPN…FFLF, IGVY…ILGF, FALF…ALFA, WFAV…AFVL, FLPV…QAII, VYLP…VVIF, AYGI…GIIA, FKIL…AGNI, and LLTG…VMYT.

This sequence belongs to the HAK/KUP transporter (TC 2.A.72) family.

It is found in the cell inner membrane. The catalysed reaction is K(+)(in) + H(+)(in) = K(+)(out) + H(+)(out). Its function is as follows. Transport of potassium into the cell. Likely operates as a K(+):H(+) symporter. The sequence is that of Probable potassium transport system protein Kup 2 from Legionella pneumophila (strain Paris).